We begin with the raw amino-acid sequence, 185 residues long: MIENIKKDAQERMGKCVDATKNQMAKVRTGRAHPSLLDSIQVSYYGTMTPLNQVANVGVEDSRTLSVTVFDRSAIQAVEKAIMSSDLGLNPMSAGATLRIPLPALTEERRKDFIKVVRNEAENGRIAIRNVRRDAISEVKKLEKAKACTEDDVRRSEEEVQKFTDAHIKKVDEILAAKEIELMEV.

This sequence belongs to the RRF family.

It localises to the cytoplasm. Responsible for the release of ribosomes from messenger RNA at the termination of protein biosynthesis. May increase the efficiency of translation by recycling ribosomes from one round of translation to another. In Shewanella baltica (strain OS185), this protein is Ribosome-recycling factor.